Reading from the N-terminus, the 476-residue chain is Transcriptional regulator claA (476 aa).

The segment at residues 25–52 is a DNA-binding region (zn(2)-C6 fungal-type); it reads CDTCLKAKIKCSQAKPTCARCLQQGRQC. Residues 63-92 are disordered; it reads PSTKNLPLDQLQQPKGRTAGGTARRSLSRR. Over residues 64–77 the composition is skewed to polar residues; the sequence is STKNLPLDQLQQPK.

The protein resides in the nucleus. Functionally, transcriptional regulator; part of the cla gene cluster that produces clavatol and ortho-quinone methide. The clavatol biosynthesis cluster cla and the terrestric acid cluster tra are both involved in the production of peniphenones and penilactones. The protein is Transcriptional regulator claA of Penicillium crustosum (Blue mold fungus).